A 126-amino-acid chain; its full sequence is Protein ApaG (126 aa).

An ApaG domain is found at 2 to 126 (SDPRYQVDVS…FRLAVPGALH (125 aa)).

In Pseudomonas fluorescens (strain ATCC BAA-477 / NRRL B-23932 / Pf-5), this protein is Protein ApaG.